The following is a 446-amino-acid chain: Tubulin beta-1 chain (446 aa).

The short motif at 1-4 is the MREI motif element; it reads MREI. Positions 11, 69, 138, 142, 143, 144, 204, and 226 each coordinate GTP. Glutamate 69 is a binding site for Mg(2+). Positions 426–446 are disordered; the sequence is QDATAEEEGEFEEEGEYEDGA. Over residues 429–446 the composition is skewed to acidic residues; the sequence is TAEEEGEFEEEGEYEDGA. At glutamate 438 the chain carries 5-glutamyl polyglutamate.

It belongs to the tubulin family. Dimer of alpha and beta chains. A typical microtubule is a hollow water-filled tube with an outer diameter of 25 nm and an inner diameter of 15 nM. Alpha-beta heterodimers associate head-to-tail to form protofilaments running lengthwise along the microtubule wall with the beta-tubulin subunit facing the microtubule plus end conferring a structural polarity. Microtubules usually have 13 protofilaments but different protofilament numbers can be found in some organisms and specialized cells. Requires Mg(2+) as cofactor. In terms of processing, some glutamate residues at the C-terminus are polyglycylated, resulting in polyglycine chains on the gamma-carboxyl group. Glycylation is mainly limited to tubulin incorporated into axonemes (cilia and flagella) whereas glutamylation is prevalent in neuronal cells, centrioles, axonemes, and the mitotic spindle. Both modifications can coexist on the same protein on adjacent residues, and lowering polyglycylation levels increases polyglutamylation, and reciprocally. The precise function of polyglycylation is still unclear. Post-translationally, some glutamate residues at the C-terminus are polyglutamylated, resulting in polyglutamate chains on the gamma-carboxyl group. Polyglutamylation plays a key role in microtubule severing by spastin (SPAST). SPAST preferentially recognizes and acts on microtubules decorated with short polyglutamate tails: severing activity by SPAST increases as the number of glutamates per tubulin rises from one to eight, but decreases beyond this glutamylation threshold. As to expression, brain.

The protein localises to the cytoplasm. It localises to the cytoskeleton. Tubulin is the major constituent of microtubules, a cylinder consisting of laterally associated linear protofilaments composed of alpha- and beta-tubulin heterodimers. Microtubules grow by the addition of GTP-tubulin dimers to the microtubule end, where a stabilizing cap forms. Below the cap, tubulin dimers are in GDP-bound state, owing to GTPase activity of alpha-tubulin. The protein is Tubulin beta-1 chain (tubb1) of Notothenia neglecta (Yellowbelly rockcod).